Reading from the N-terminus, the 360-residue chain is Peptide chain release factor 1 (360 aa).

Q235 is subject to N5-methylglutamine.

The protein belongs to the prokaryotic/mitochondrial release factor family. In terms of processing, methylated by PrmC. Methylation increases the termination efficiency of RF1.

It is found in the cytoplasm. In terms of biological role, peptide chain release factor 1 directs the termination of translation in response to the peptide chain termination codons UAG and UAA. In Cupriavidus pinatubonensis (strain JMP 134 / LMG 1197) (Cupriavidus necator (strain JMP 134)), this protein is Peptide chain release factor 1.